The chain runs to 172 residues: 3-hydroxydecanoyl-[acyl-carrier-protein] dehydratase (172 aa).

His71 is a catalytic residue.

It belongs to the thioester dehydratase family. FabA subfamily. Homodimer.

It localises to the cytoplasm. It catalyses the reaction a (3R)-hydroxyacyl-[ACP] = a (2E)-enoyl-[ACP] + H2O. The enzyme catalyses (3R)-hydroxydecanoyl-[ACP] = (2E)-decenoyl-[ACP] + H2O. It carries out the reaction (2E)-decenoyl-[ACP] = (3Z)-decenoyl-[ACP]. The protein operates within lipid metabolism; fatty acid biosynthesis. Functionally, necessary for the introduction of cis unsaturation into fatty acids. Catalyzes the dehydration of (3R)-3-hydroxydecanoyl-ACP to E-(2)-decenoyl-ACP and then its isomerization to Z-(3)-decenoyl-ACP. Can catalyze the dehydratase reaction for beta-hydroxyacyl-ACPs with saturated chain lengths up to 16:0, being most active on intermediate chain length. The protein is 3-hydroxydecanoyl-[acyl-carrier-protein] dehydratase of Escherichia coli O6:K15:H31 (strain 536 / UPEC).